We begin with the raw amino-acid sequence, 615 residues long: Elongation factor 4 (615 aa).

A tr-type G domain is found at 14–200; that stretch reads ARIRNFCIIA…KVVELIPAPT (187 aa). Residues 26–31 and 147–150 each bind GTP; these read DHGKST and NKID.

This sequence belongs to the TRAFAC class translation factor GTPase superfamily. Classic translation factor GTPase family. LepA subfamily.

The protein localises to the cell membrane. The enzyme catalyses GTP + H2O = GDP + phosphate + H(+). Required for accurate and efficient protein synthesis under certain stress conditions. May act as a fidelity factor of the translation reaction, by catalyzing a one-codon backward translocation of tRNAs on improperly translocated ribosomes. Back-translocation proceeds from a post-translocation (POST) complex to a pre-translocation (PRE) complex, thus giving elongation factor G a second chance to translocate the tRNAs correctly. Binds to ribosomes in a GTP-dependent manner. This is Elongation factor 4 from Corynebacterium glutamicum (strain ATCC 13032 / DSM 20300 / JCM 1318 / BCRC 11384 / CCUG 27702 / LMG 3730 / NBRC 12168 / NCIMB 10025 / NRRL B-2784 / 534).